The primary structure comprises 227 residues: Probable cell wall protein PGA42 (227 aa).

The signal sequence occupies residues 1 to 16 (MKFIILLFALIHITVA). A glycan (N-linked (GlcNAc...) asparagine) is linked at Asn192. The GPI-anchor amidated serine moiety is linked to residue Ser200. A propeptide spans 201 to 227 (GSQIFVLCVISVVGFIFFFLFFLSLFV) (removed in mature form).

Belongs to the IHD1 family. The GPI-anchor is attached to the protein in the endoplasmic reticulum and serves to target the protein to the cell surface. There, the glucosamine-inositol phospholipid moiety is cleaved off and the GPI-modified mannoprotein is covalently attached via its lipidless GPI glycan remnant to the 1,6-beta-glucan of the outer cell wall layer.

The protein localises to the secreted. The protein resides in the cell wall. It localises to the membrane. Its function is as follows. Probable GPI-anchored cell wall protein that may be involved in cell wall organization, hyphal growth, as well as in virulence. The protein is Probable cell wall protein PGA42 (PGA42) of Candida albicans (strain SC5314 / ATCC MYA-2876) (Yeast).